Reading from the N-terminus, the 535-residue chain is Glucose-6-phosphate isomerase (535 aa).

E347 acts as the Proton donor in catalysis. Active-site residues include H378 and K493.

The protein belongs to the GPI family.

The protein localises to the cytoplasm. The enzyme catalyses alpha-D-glucose 6-phosphate = beta-D-fructose 6-phosphate. It functions in the pathway carbohydrate biosynthesis; gluconeogenesis. Its pathway is carbohydrate degradation; glycolysis; D-glyceraldehyde 3-phosphate and glycerone phosphate from D-glucose: step 2/4. Catalyzes the reversible isomerization of glucose-6-phosphate to fructose-6-phosphate. This chain is Glucose-6-phosphate isomerase, found in Chlamydia felis (strain Fe/C-56) (Chlamydophila felis).